We begin with the raw amino-acid sequence, 2051 residues long: Autophagy-related protein 2 (2051 aa).

Positions 31 to 121 (QALDLDNLNF…QDEQTAKNKK (91 aa)) constitute a Chorein N-terminal domain. The segment covering 108–117 (SKQEQDEQTA) has biased composition (basic and acidic residues). Disordered regions lie at residues 108–129 (SKQE…DGDE), 152–179 (RRLE…DDDG), 297–331 (SLVK…DMSI), 363–384 (DTQY…TPRA), 419–466 (RSEP…ADTE), and 501–564 (PGGW…DTST). Polar residues-rich tracts occupy residues 374 to 383 (AGSSPLSTPR) and 426 to 435 (PPTSFQPQTM). The segment covering 436 to 454 (PSGAVSPAPSEPSSSASSV) has biased composition (low complexity).

It belongs to the ATG2 family.

The protein resides in the preautophagosomal structure membrane. Its subcellular location is the endoplasmic reticulum membrane. It carries out the reaction a 1,2-diacyl-sn-glycero-3-phosphocholine(in) = a 1,2-diacyl-sn-glycero-3-phosphocholine(out). It catalyses the reaction a 1,2-diacyl-sn-glycero-3-phospho-L-serine(in) = a 1,2-diacyl-sn-glycero-3-phospho-L-serine(out). The enzyme catalyses a 1,2-diacyl-sn-glycero-3-phosphoethanolamine(in) = a 1,2-diacyl-sn-glycero-3-phosphoethanolamine(out). Lipid transfer protein required for autophagosome completion and peroxisome degradation. Tethers the edge of the isolation membrane (IM) to the endoplasmic reticulum (ER) and mediates direct lipid transfer from ER to IM for IM expansion. Atg-2 binds to the ER exit site (ERES), which is the membrane source for autophagosome formation, using basic residues in its N-terminal region (NR) and to the expanding edge of the IM through its C-terminal region. The latter binding is assisted by an atg-18-PtdIns3P interaction. Atg-2 then extracts phospholipids from the membrane source using its NR and transfers them to atg-9 to the IM through its predicted beta-sheet-rich structure for membrane expansion. The polypeptide is Autophagy-related protein 2 (apg-2) (Neurospora crassa (strain ATCC 24698 / 74-OR23-1A / CBS 708.71 / DSM 1257 / FGSC 987)).